The primary structure comprises 120 residues: Large ribosomal subunit protein uL18 (120 aa).

The protein belongs to the universal ribosomal protein uL18 family. As to quaternary structure, part of the 50S ribosomal subunit; part of the 5S rRNA/L5/L18/L25 subcomplex. Contacts the 5S and 23S rRNAs.

In terms of biological role, this is one of the proteins that bind and probably mediate the attachment of the 5S RNA into the large ribosomal subunit, where it forms part of the central protuberance. In Methylorubrum populi (strain ATCC BAA-705 / NCIMB 13946 / BJ001) (Methylobacterium populi), this protein is Large ribosomal subunit protein uL18.